The chain runs to 130 residues: Zinc finger A20 and AN1 domain-containing stress-associated protein 10 (130 aa).

The segment at 4-38 adopts an A20-type zinc-finger fold; that stretch reads ETEALPCEGGCGLYGTRVNNNLCSLCYKKSVLQHS. Zn(2+) is bound by residues Cys-10, Cys-14, Cys-26, Cys-29, Cys-71, Cys-74, Cys-85, Cys-87, Cys-92, His-95, His-101, and Cys-103. The AN1-type zinc-finger motif lies at 65 to 111; that stretch reads PVKKRRCGICKRKVGMLGFKCRCGHMFCGSHRYPEEHSCPFDYKQSG.

Its function is as follows. May be involved in environmental stress response. The chain is Zinc finger A20 and AN1 domain-containing stress-associated protein 10 (SAP10) from Arabidopsis thaliana (Mouse-ear cress).